The chain runs to 349 residues: Quinolinate synthase (349 aa).

Iminosuccinate contacts are provided by His52 and Ser69. Cys114 contacts [4Fe-4S] cluster. Residues 140 to 142 (YFN) and Ser157 contribute to the iminosuccinate site. Position 201 (Cys201) interacts with [4Fe-4S] cluster. Iminosuccinate-binding positions include 227–229 (HPE) and Thr255. Cys300 lines the [4Fe-4S] cluster pocket.

It belongs to the quinolinate synthase family. Type 2 subfamily. [4Fe-4S] cluster is required as a cofactor.

It is found in the cytoplasm. It catalyses the reaction iminosuccinate + dihydroxyacetone phosphate = quinolinate + phosphate + 2 H2O + H(+). Its pathway is cofactor biosynthesis; NAD(+) biosynthesis; quinolinate from iminoaspartate: step 1/1. In terms of biological role, catalyzes the condensation of iminoaspartate with dihydroxyacetone phosphate to form quinolinate. The chain is Quinolinate synthase from Mycolicibacterium paratuberculosis (strain ATCC BAA-968 / K-10) (Mycobacterium paratuberculosis).